A 634-amino-acid chain; its full sequence is Probable potassium transport system protein Kup 2 (634 aa).

12 helical membrane-spanning segments follow: residues 20–40 (FWTL…TSPL), 64–84 (VLSL…VLLI), 110–130 (FAAI…DAII), 148–168 (PGFD…LFLV), 174–194 (AAVA…MAVA), 224–244 (AGLL…ALYA), 258–278 (WLVL…AMLL), 290–310 (LLFP…ATII), 348–368 (IYIP…VFAF), 377–397 (AYGI…FFVM), 405–425 (AAVA…FLMA), and 430–450 (IVDG…VMVT).

It belongs to the HAK/KUP transporter (TC 2.A.72) family.

The protein resides in the cell inner membrane. The enzyme catalyses K(+)(in) + H(+)(in) = K(+)(out) + H(+)(out). Its function is as follows. Transport of potassium into the cell. Likely operates as a K(+):H(+) symporter. The sequence is that of Probable potassium transport system protein Kup 2 from Rhodopseudomonas palustris (strain ATCC BAA-98 / CGA009).